A 292-amino-acid polypeptide reads, in one-letter code: Elongation factor Ts (292 aa).

Positions 80 to 83 (TDSV) are involved in Mg(2+) ion dislocation from EF-Tu.

The protein belongs to the EF-Ts family.

It is found in the cytoplasm. In terms of biological role, associates with the EF-Tu.GDP complex and induces the exchange of GDP to GTP. It remains bound to the aminoacyl-tRNA.EF-Tu.GTP complex up to the GTP hydrolysis stage on the ribosome. The polypeptide is Elongation factor Ts (Lactiplantibacillus plantarum (strain ATCC BAA-793 / NCIMB 8826 / WCFS1) (Lactobacillus plantarum)).